Here is a 343-residue protein sequence, read N- to C-terminus: tRNA N6-adenosine threonylcarbamoyltransferase (343 aa).

Fe cation is bound by residues histidine 120 and histidine 124. Residues 142-146 (VVSGG), aspartate 175, glycine 188, aspartate 192, and asparagine 281 each bind substrate. Aspartate 310 provides a ligand contact to Fe cation.

This sequence belongs to the KAE1 / TsaD family. Fe(2+) is required as a cofactor.

It is found in the cytoplasm. The catalysed reaction is L-threonylcarbamoyladenylate + adenosine(37) in tRNA = N(6)-L-threonylcarbamoyladenosine(37) in tRNA + AMP + H(+). Required for the formation of a threonylcarbamoyl group on adenosine at position 37 (t(6)A37) in tRNAs that read codons beginning with adenine. Is involved in the transfer of the threonylcarbamoyl moiety of threonylcarbamoyl-AMP (TC-AMP) to the N6 group of A37, together with TsaE and TsaB. TsaD likely plays a direct catalytic role in this reaction. The protein is tRNA N6-adenosine threonylcarbamoyltransferase of Bacillus anthracis.